The following is a 367-amino-acid chain: 5-amino-6-(D-ribitylamino)uracil--L-tyrosine 4-hydroxyphenyl transferase (367 aa).

Positions 56 to 290 (VTYVRNQNIN…MFAVARLFLD (235 aa)) constitute a Radical SAM core domain. Cys-70, Cys-74, and Cys-77 together coordinate [4Fe-4S] cluster.

The protein belongs to the radical SAM superfamily. CofH family. In terms of assembly, consists of two subunits, CofG and CofH. It depends on [4Fe-4S] cluster as a cofactor.

The enzyme catalyses 5-amino-6-(D-ribitylamino)uracil + L-tyrosine + S-adenosyl-L-methionine = 5-amino-5-(4-hydroxybenzyl)-6-(D-ribitylimino)-5,6-dihydrouracil + 2-iminoacetate + 5'-deoxyadenosine + L-methionine + H(+). It functions in the pathway cofactor biosynthesis; coenzyme F0 biosynthesis. Functionally, catalyzes the radical-mediated synthesis of 5-amino-5-(4-hydroxybenzyl)-6-(D-ribitylimino)-5,6-dihydrouracil from 5-amino-6-(D-ribitylamino)uracil and L-tyrosine. In Methanoculleus marisnigri (strain ATCC 35101 / DSM 1498 / JR1), this protein is 5-amino-6-(D-ribitylamino)uracil--L-tyrosine 4-hydroxyphenyl transferase.